We begin with the raw amino-acid sequence, 333 residues long: Adenosine deaminase (333 aa).

The Zn(2+) site is built by histidine 12 and histidine 14. Residues histidine 14, aspartate 16, and glycine 170 each coordinate substrate. Histidine 197 is a Zn(2+) binding site. The active-site Proton donor is the glutamate 200. Aspartate 278 contacts Zn(2+). Aspartate 279 contributes to the substrate binding site.

The protein belongs to the metallo-dependent hydrolases superfamily. Adenosine and AMP deaminases family. Adenosine deaminase subfamily. Requires Zn(2+) as cofactor.

The enzyme catalyses adenosine + H2O + H(+) = inosine + NH4(+). It catalyses the reaction 2'-deoxyadenosine + H2O + H(+) = 2'-deoxyinosine + NH4(+). Catalyzes the hydrolytic deamination of adenosine and 2-deoxyadenosine. The protein is Adenosine deaminase of Edwardsiella ictaluri (strain 93-146).